The chain runs to 321 residues: Replication factor C small subunit (321 aa).

43–50 (GFAGVGKT) is a binding site for ATP.

It belongs to the activator 1 small subunits family. RfcS subfamily. Heteromultimer composed of small subunits (RfcS) and large subunits (RfcL).

Part of the RFC clamp loader complex which loads the PCNA sliding clamp onto DNA. In Methanosphaera stadtmanae (strain ATCC 43021 / DSM 3091 / JCM 11832 / MCB-3), this protein is Replication factor C small subunit.